The sequence spans 963 residues: Aminopeptidase N (963 aa).

Residues 2–8 (AKGFYIS) lie on the Cytoplasmic side of the membrane. A helical; Signal-anchor for type II membrane protein transmembrane segment spans residues 9–32 (KALGILGILLGVAAVATIIALSVV). The tract at residues 33-64 (YAQEKNKNAEHVPQAPTSPTITTTAAITLDQS) is cytosolic Ser/Thr-rich junction. The Extracellular segment spans residues 33-963 (YAQEKNKNAE…VVLNWFIEHS (931 aa)). The interval 65–963 (KPWNRYRLPT…VVLNWFIEHS (899 aa)) is metalloprotease. 2 N-linked (GlcNAc...) asparagine glycosylation sites follow: Asn-82 and Asn-124. Position 171 is a sulfotyrosine (Tyr-171). Residues Asn-229, Asn-237, Asn-258, Asn-286, Asn-314, and Asn-328 are each glycosylated (N-linked (GlcNAc...) asparagine). Position 347 to 351 (347 to 351 (GAMEN)) interacts with substrate. His-383 provides a ligand contact to Zn(2+). The Proton acceptor role is filled by Glu-384. 2 residues coordinate Zn(2+): His-387 and Glu-406. 6 N-linked (GlcNAc...) asparagine glycosylation sites follow: Asn-506, Asn-556, Asn-569, Asn-622, Asn-646, and Asn-736. The segment at 717–813 (KYLRKQVEPL…DQWDFAWGQL (97 aa)) is interaction with TGEV spike glycoprotein. 2 disulfide bridges follow: Cys-758–Cys-765 and Cys-795–Cys-831.

The protein belongs to the peptidase M1 family. Homodimer. Interacts with SLC6A19. In terms of assembly, (Microbial infection) Interacts with TGEV and PRCoV spike glycoprotein. Zn(2+) serves as cofactor. Sulfated. In terms of processing, N- and O-glycosylated. Post-translationally, may undergo proteolysis and give rise to a soluble form.

The protein localises to the cell membrane. It catalyses the reaction Release of an N-terminal amino acid, Xaa-|-Yaa- from a peptide, amide or arylamide. Xaa is preferably Ala, but may be most amino acids including Pro (slow action). When a terminal hydrophobic residue is followed by a prolyl residue, the two may be released as an intact Xaa-Pro dipeptide.. Broad specificity aminopeptidase which plays a role in the final digestion of peptides generated from hydrolysis of proteins by gastric and pancreatic proteases. Also involved in the processing of various peptides including peptide hormones, such as angiotensin III and IV, neuropeptides, and chemokines. May also be involved the cleavage of peptides bound to major histocompatibility complex class II molecules of antigen presenting cells. May have a role in angiogenesis and promote cholesterol crystallization. It is able to degrade Leu-enkephalin and Met-enkephalin but not cholecystokinin CCK8, neuromedin C (GRP-10), somatostatin-14, substance P and vasoactive intestinal peptide. May have a role in amino acid transport by acting as binding partner of amino acid transporter SLC6A19 and regulating its activity. Functionally, (Microbial infection) In case of porcine transmissible gastroenteritis coronavirus (TGEV) and porcine respiratory coronavirus (PRCoV) infections, serves as a receptor for TGEV and PRCoV spike glycoprotein in a species-specific manner. The protein is Aminopeptidase N (ANPEP) of Sus scrofa (Pig).